The chain runs to 248 residues: Probable transcriptional regulatory protein Mrad2831_3553 (248 aa).

Belongs to the TACO1 family.

Its subcellular location is the cytoplasm. The sequence is that of Probable transcriptional regulatory protein Mrad2831_3553 from Methylobacterium radiotolerans (strain ATCC 27329 / DSM 1819 / JCM 2831 / NBRC 15690 / NCIMB 10815 / 0-1).